Reading from the N-terminus, the 80-residue chain is Cell division protein ZapB (80 aa).

Residues leucine 3 to glutamate 80 are a coiled coil. The disordered stretch occupies residues leucine 41–aspartate 60. Positions serine 49–aspartate 60 are enriched in basic and acidic residues.

Belongs to the ZapB family. As to quaternary structure, homodimer. The ends of the coiled-coil dimer bind to each other, forming polymers. Interacts with FtsZ.

The protein localises to the cytoplasm. In terms of biological role, non-essential, abundant cell division factor that is required for proper Z-ring formation. It is recruited early to the divisome by direct interaction with FtsZ, stimulating Z-ring assembly and thereby promoting cell division earlier in the cell cycle. Its recruitment to the Z-ring requires functional FtsA or ZipA. The sequence is that of Cell division protein ZapB from Aliivibrio fischeri (strain ATCC 700601 / ES114) (Vibrio fischeri).